The sequence spans 478 residues: GDP-fucose protein O-fucosyltransferase 3 (478 aa).

Over 1 to 8 the chain is Cytoplasmic; the sequence is MVWIQRRR. The chain crosses the membrane as a helical; Signal-anchor for type II membrane protein span at residues 9–31; the sequence is LLASCLCITATVFLLVTLQVVVE. Over 32-478 the chain is Lumenal; it reads LGKFERKKFK…QEFWALVFKD (447 aa). 2 N-linked (GlcNAc...) asparagine glycosylation sites follow: N110 and N168. A disulfide bond links C389 and C392.

The protein belongs to the glycosyltransferase 10 family.

It is found in the endoplasmic reticulum membrane. It catalyses the reaction L-threonyl-[protein] + GDP-beta-L-fucose = 3-O-(alpha-L-fucosyl)-L-threonyl-[protein] + GDP + H(+). It carries out the reaction L-seryl-[protein] + GDP-beta-L-fucose = 3-O-(alpha-L-fucosyl)-L-seryl-[protein] + GDP + H(+). It participates in protein modification; protein glycosylation. Functionally, protein O-fucosyltransferase that specifically catalyzes O-fucosylation of serine or threonine residues in EMI domains of target proteins, such as MMRN1, MMRN2 and EMID1. Attaches fucose through an O-glycosidic linkage. O-fucosylation of EMI domain-containing proteins may be required for facilitating protein folding and secretion. May also show alpha-(1,3)-fucosyltransferase activity toward the innermost N-acetyl glucosamine (GlcNAc) residue in biantennary N-glycan acceptors. However, this was tested with a library of synthetic substrates and this activity is unsure in vivo. May be involved in biosynthesis of Lewis X-carrying biantennary N-glycans that regulate neuron stem cell self-renewal during brain development. This is GDP-fucose protein O-fucosyltransferase 3 (FUT10) from Canis lupus familiaris (Dog).